The following is a 349-amino-acid chain: 5-deoxyribose 1-phosphate isomerase (349 aa).

Substrate is bound by residues 49-51, R92, and Q199; that span reads RGA. D240 functions as the Proton donor in the catalytic mechanism. 250-251 lines the substrate pocket; sequence NK.

Belongs to the EIF-2B alpha/beta/delta subunits family. DrdI subfamily.

The catalysed reaction is 5-deoxy-alpha-D-ribose 1-phosphate = 5-deoxy-D-ribulose 1-phosphate. The protein operates within carbohydrate degradation. Functionally, catalyzes the isomerization of 5-deoxy-alpha-D-ribose 1-phosphate to 5-deoxy-D-ribulose 1-phosphate, as part of a 5-deoxyribose salvage pathway that recycles this toxic radical SAM enzyme by-product to mainstream metabolites. The sequence is that of 5-deoxyribose 1-phosphate isomerase from Clostridium botulinum (strain Langeland / NCTC 10281 / Type F).